Reading from the N-terminus, the 262-residue chain is Small ribosomal subunit protein eS1 (262 aa).

Residues 235–253 (HGDGKGSDEPGAKVSRPEA) show a composition bias toward basic and acidic residues. Positions 235-262 (HGDGKGSDEPGAKVSRPEAYEPPVQESV) are disordered.

This sequence belongs to the eukaryotic ribosomal protein eS1 family. Component of the small ribosomal subunit. Mature ribosomes consist of a small (40S) and a large (60S) subunit. The 40S subunit contains about 33 different proteins and 1 molecule of RNA (18S). The 60S subunit contains about 49 different proteins and 3 molecules of RNA (28S, 5.8S and 5S).

It is found in the cytoplasm. This chain is Small ribosomal subunit protein eS1, found in Triatoma infestans (Assassin bug).